A 95-amino-acid polypeptide reads, in one-letter code: Protein TusB (95 aa).

This sequence belongs to the DsrH/TusB family. As to quaternary structure, heterohexamer, formed by a dimer of trimers. The hexameric TusBCD complex contains 2 copies each of TusB, TusC and TusD. The TusBCD complex interacts with TusE.

It is found in the cytoplasm. Part of a sulfur-relay system required for 2-thiolation of 5-methylaminomethyl-2-thiouridine (mnm(5)s(2)U) at tRNA wobble positions. The protein is Protein TusB of Escherichia coli (strain ATCC 8739 / DSM 1576 / NBRC 3972 / NCIMB 8545 / WDCM 00012 / Crooks).